The chain runs to 329 residues: DNA-directed RNA polymerase subunit alpha (329 aa).

Residues 1-235 (MQGSVTEFLK…EQLDAFVDLR (235 aa)) form an alpha N-terminal domain (alpha-NTD) region. Residues 249–329 (FDPILLRPVD…NWPPASIAED (81 aa)) form an alpha C-terminal domain (alpha-CTD) region.

Belongs to the RNA polymerase alpha chain family. Homodimer. The RNAP catalytic core consists of 2 alpha, 1 beta, 1 beta' and 1 omega subunit. When a sigma factor is associated with the core the holoenzyme is formed, which can initiate transcription.

The enzyme catalyses RNA(n) + a ribonucleoside 5'-triphosphate = RNA(n+1) + diphosphate. Its function is as follows. DNA-dependent RNA polymerase catalyzes the transcription of DNA into RNA using the four ribonucleoside triphosphates as substrates. The polypeptide is DNA-directed RNA polymerase subunit alpha (Photobacterium profundum (strain SS9)).